Here is a 138-residue protein sequence, read N- to C-terminus: Phosphoribosyl-AMP cyclohydrolase (138 aa).

D92 lines the Mg(2+) pocket. A Zn(2+)-binding site is contributed by C93. Residues D94 and D96 each contribute to the Mg(2+) site. Zn(2+)-binding residues include C109 and C116.

The protein belongs to the PRA-CH family. Homodimer. Requires Mg(2+) as cofactor. Zn(2+) is required as a cofactor.

The protein localises to the cytoplasm. The enzyme catalyses 1-(5-phospho-beta-D-ribosyl)-5'-AMP + H2O = 1-(5-phospho-beta-D-ribosyl)-5-[(5-phospho-beta-D-ribosylamino)methylideneamino]imidazole-4-carboxamide. It participates in amino-acid biosynthesis; L-histidine biosynthesis; L-histidine from 5-phospho-alpha-D-ribose 1-diphosphate: step 3/9. Catalyzes the hydrolysis of the adenine ring of phosphoribosyl-AMP. The sequence is that of Phosphoribosyl-AMP cyclohydrolase from Clavibacter sepedonicus (Clavibacter michiganensis subsp. sepedonicus).